Consider the following 403-residue polypeptide: Propionate kinase (403 aa).

The protein belongs to the acetokinase family. PduW subfamily.

The protein localises to the cytoplasm. It catalyses the reaction propanoate + ATP = propanoyl phosphate + ADP. The protein operates within polyol metabolism; 1,2-propanediol degradation. Functionally, works with phosphate acetyltransferase (pta) to capture exogenous propionate and regenerate propionyl-CoA during degradation of 1,2-propanediol (1,2-PD). This chain is Propionate kinase, found in Citrobacter rodentium (strain ICC168) (Citrobacter freundii biotype 4280).